The following is a 97-amino-acid chain: Protein transport protein SFT1 (97 aa).

Topologically, residues 1-74 (MSNSRYSQTE…RLTRSLKAGN (74 aa)) are cytoplasmic. Residues 7-69 (SQTESNNDRK…KNSSSRLTRS (63 aa)) form the t-SNARE coiled-coil homology domain. Residues 75-94 (SIWRMVGLALLIFFILYTLF) traverse the membrane as a helical; Anchor for type IV membrane protein segment. Over 95-97 (KLF) the chain is Lumenal.

As to quaternary structure, component of a SNARE complex consisting of SED5, GOS1, YKT6 and SFT1.

The protein resides in the golgi apparatus membrane. Vesicle SNARE required for retrograde transport within the Golgi complex. The polypeptide is Protein transport protein SFT1 (SFT1) (Saccharomyces cerevisiae (strain ATCC 204508 / S288c) (Baker's yeast)).